The following is a 429-amino-acid chain: UDP-N-acetylglucosamine 1-carboxyvinyltransferase (429 aa).

Position 22 to 23 (22 to 23) interacts with phosphoenolpyruvate; that stretch reads KN. UDP-N-acetyl-alpha-D-glucosamine is bound at residue arginine 102. Cysteine 126 functions as the Proton donor in the catalytic mechanism. At cysteine 126 the chain carries 2-(S-cysteinyl)pyruvic acid O-phosphothioketal. UDP-N-acetyl-alpha-D-glucosamine is bound by residues 131–135, 171–174, aspartate 316, and isoleucine 338; these read RPVDL and KVSV.

This sequence belongs to the EPSP synthase family. MurA subfamily.

The protein resides in the cytoplasm. It catalyses the reaction phosphoenolpyruvate + UDP-N-acetyl-alpha-D-glucosamine = UDP-N-acetyl-3-O-(1-carboxyvinyl)-alpha-D-glucosamine + phosphate. It functions in the pathway cell wall biogenesis; peptidoglycan biosynthesis. In terms of biological role, cell wall formation. Adds enolpyruvyl to UDP-N-acetylglucosamine. This Chelativorans sp. (strain BNC1) protein is UDP-N-acetylglucosamine 1-carboxyvinyltransferase.